The chain runs to 204 residues: Urease accessory protein UreG (204 aa).

GTP is bound at residue 12 to 19; the sequence is GPVGSGKT.

The protein belongs to the SIMIBI class G3E GTPase family. UreG subfamily. As to quaternary structure, homodimer. UreD, UreF and UreG form a complex that acts as a GTP-hydrolysis-dependent molecular chaperone, activating the urease apoprotein by helping to assemble the nickel containing metallocenter of UreC. The UreE protein probably delivers the nickel.

It is found in the cytoplasm. Functionally, facilitates the functional incorporation of the urease nickel metallocenter. This process requires GTP hydrolysis, probably effectuated by UreG. In Pseudomonas aeruginosa (strain LESB58), this protein is Urease accessory protein UreG.